We begin with the raw amino-acid sequence, 435 residues long: Chromatin structure-remodeling complex subunit RSC7 (435 aa).

Residues 1–97 form a disordered region; sequence MSDSEGGLAS…DKGVTRSRNR (97 aa). Residues 30–66 are compositionally biased toward acidic residues; the sequence is DTEDLDIDENDENEDDDYREEEANEGVNEEEISDEEE. Phosphoserine is present on S86. Residues 248 to 435 form a functional region; able to complement all NPL6 null allele phenotypes region; sequence ELRTKGNVIE…QNFEKCNEYI (188 aa).

It belongs to the RSC7/SWP82 family. RSC7 subfamily. In terms of assembly, interacts with ARP7, ARP9, RSC3, RSC8, RSC30 and STH1. Component of the two forms of the RSC complex composed of at least either RSC1 or RSC2, and ARP7, ARP9, LDB7, NPL6, RSC3, RSC30, RSC4, RSC58, RSC6, RSC8, RSC9, SFH1, STH1, HTL1 and probably RTT102. The complexes interact with histone and histone variant components of centromeric chromatin. Component of a fungal-specific module (HTL1-LDB7-NPL6-RSC3-RSC30) within the RSC complex.

The protein resides in the nucleus. Component of the chromatin structure remodeling complex (RSC), which is involved in transcription regulation and nucleosome positioning. RSC is responsible for the transfer of a histone octamer from a nucleosome core particle to naked DNA. The reaction requires ATP and involves an activated RSC-nucleosome intermediate. Remodeling reaction also involves DNA translocation, DNA twist and conformational change. As a reconfigurer of centromeric and flanking nucleosomes, RSC complex is required both for proper kinetochore function in chromosome segregation and, via a PKC1-dependent signaling pathway, for organization of the cellular cytoskeleton. Together with HTL1, LDB7, RSC3, RSC30 components, defines a fungal-specific module within the RSC complex that plays a role in many cellular functions including the maintenance of cell wall integrity. Acidic protein important for nuclear protein localization. The protein is Chromatin structure-remodeling complex subunit RSC7 (NPL6) of Saccharomyces cerevisiae (strain ATCC 204508 / S288c) (Baker's yeast).